A 350-amino-acid polypeptide reads, in one-letter code: Quercetin 2,3-dioxygenase (350 aa).

A cupin 1 region spans residues 1 to 145 (DTSSLIVEDA…FYYLGTNATD (145 aa)). Residues His66, His68, and Glu73 each coordinate Cu cation. His66 serves as a coordination point for substrate. Glu73 contacts substrate. N-linked (GlcNAc...) asparagine glycans are attached at residues Asn90 and Asn109. A Cu cation-binding site is contributed by His112. Asn142 carries an N-linked (GlcNAc...) asparagine glycan. The segment at 146-205 (TTHTPYIPSSSDSSSTTGPDSSTISTLQSFDVYAELSFTPRTDTVNGTAPANTVWHTGAN) is linker. The tract at residues 148–167 (HTPYIPSSSDSSSTTGPDSS) is disordered. The segment covering 152–167 (IPSSSDSSSTTGPDSS) has biased composition (low complexity). N-linked (GlcNAc...) asparagine glycans are attached at residues Asn191 and Asn248. The segment at 206 to 350 (ALASTAGDPY…WSSVSFPADW (145 aa)) is cupin 2.

In terms of assembly, homodimer. Cu cation serves as cofactor. The N-linked glycan at Asn-191 consists of Man(5)-GlcNAc(2).

The enzyme catalyses quercetin + O2 = 2-(3,4-dihydroxybenzoyloxy)-4,6-dihydroxybenzoate + CO. It participates in flavonoid metabolism; quercetin degradation. Inhibited by diethyldithiocarbamate and kojic acid. Its function is as follows. Performs the first step in the degradation of the flavonoid quercetin by a dioxygenase reaction. The enzyme catalyzes the cleavage of the O-heteroaromatic ring of the flavonol quercetin yielding the depside 2-protocatechuoyl-phloroglucinol carboxylic acid and carbon monoxide. This involves the remarkable dioxygenolytic cleavage of two carbon-carbon bonds. The chain is Quercetin 2,3-dioxygenase from Aspergillus japonicus.